A 113-amino-acid polypeptide reads, in one-letter code: UPF0342 protein SMU_782 (113 aa).

Belongs to the UPF0342 family.

This is UPF0342 protein SMU_782 from Streptococcus mutans serotype c (strain ATCC 700610 / UA159).